The following is a 136-amino-acid chain: Calcitonin (136 aa).

Residues 1–25 form the signal peptide; sequence MGFLKFSPFLVVSILLLYQACGLQA. Residues 26–82 constitute a propeptide that is removed on maturation; the sequence is VPLRSTLESSPGMATLSEEEARLLAALVQNYMQMKVRELEQEEEQEAEGSSLDSPRS. Serine 42 is modified (phosphoserine). The tract at residues 64–84 is disordered; the sequence is LEQEEEQEAEGSSLDSPRSKR. A disulfide bridge connects residues cysteine 85 and cysteine 91. Asparagine 87 is a glycosylation site (N-linked (GlcNAc...) asparagine). The tract at residues 114–136 is disordered; that stretch reads GAPGKKRDMAKDLETNHHPYFGN. A Proline amide modification is found at proline 116. The span at 118 to 130 shows a compositional bias: basic and acidic residues; that stretch reads KKRDMAKDLETNH. The propeptide occupies 121 to 136; sequence DMAKDLETNHHPYFGN.

Belongs to the calcitonin family.

It is found in the secreted. Its function is as follows. Calcitonin is a peptide hormone that causes a rapid but short-lived drop in the level of calcium and phosphate in blood by promoting the incorporation of those ions in the bones. Calcitonin function is mediated by the calcitonin receptor/CALCR and the CALCR-RAMP2 (AMYR2) receptor complex. This is Calcitonin from Rattus norvegicus (Rat).